The sequence spans 307 residues: Protoheme IX farnesyltransferase (307 aa).

Transmembrane regions (helical) follow at residues 33 to 53, 62 to 82, 111 to 131, 132 to 152, 159 to 179, 185 to 205, 229 to 249, 251 to 271, and 287 to 307; these read IGIVNSNLITTFAGMWLAFYF, LHIVFFTLFGAALVIAGSCSI, RVLWLGVTLVAIGTMSLLMTT, VTAAIVGLIGVVTYVFLYTLW, LNTVVGSISGAVPPVIGWTAV, IVPLILFLIMFLWQPPHFLAL, MTKRQIIVWVACLLPLPFYLF, LGIPFLIVATVLNVGWLLLGL, and FVYSLNYLTILFVAMVIATIW.

It belongs to the UbiA prenyltransferase family. Protoheme IX farnesyltransferase subfamily. As to quaternary structure, interacts with CtaA.

The protein resides in the cell membrane. It carries out the reaction heme b + (2E,6E)-farnesyl diphosphate + H2O = Fe(II)-heme o + diphosphate. Its pathway is porphyrin-containing compound metabolism; heme O biosynthesis; heme O from protoheme: step 1/1. Functionally, converts heme B (protoheme IX) to heme O by substitution of the vinyl group on carbon 2 of heme B porphyrin ring with a hydroxyethyl farnesyl side group. This is Protoheme IX farnesyltransferase from Geobacillus thermodenitrificans (strain NG80-2).